A 360-amino-acid chain; its full sequence is Fructose-bisphosphate aldolase 1 (360 aa).

Ser-63 provides a ligand contact to D-glyceraldehyde 3-phosphate. The Proton donor role is filled by Asp-110. Residues His-111, Asp-145, Glu-175, and His-227 each contribute to the Zn(2+) site. Gly-228 is a binding site for dihydroxyacetone phosphate. His-266 serves as a coordination point for Zn(2+). Residue 267–269 participates in dihydroxyacetone phosphate binding; the sequence is GGS.

Belongs to the class II fructose-bisphosphate aldolase family. As to quaternary structure, homodimer. The cofactor is Zn(2+).

It catalyses the reaction beta-D-fructose 1,6-bisphosphate = D-glyceraldehyde 3-phosphate + dihydroxyacetone phosphate. Its pathway is carbohydrate degradation; glycolysis; D-glyceraldehyde 3-phosphate and glycerone phosphate from D-glucose: step 4/4. Functionally, catalyzes the aldol condensation of dihydroxyacetone phosphate (DHAP or glycerone-phosphate) with glyceraldehyde 3-phosphate (G3P) to form fructose 1,6-bisphosphate (FBP) in gluconeogenesis and the reverse reaction in glycolysis. In Paracoccidioides lutzii (strain ATCC MYA-826 / Pb01) (Paracoccidioides brasiliensis), this protein is Fructose-bisphosphate aldolase 1 (FBA1).